The primary structure comprises 102 residues: Large ribosomal subunit protein bL21 (102 aa).

The protein belongs to the bacterial ribosomal protein bL21 family. Part of the 50S ribosomal subunit. Contacts protein L20.

Functionally, this protein binds to 23S rRNA in the presence of protein L20. In Ehrlichia chaffeensis (strain ATCC CRL-10679 / Arkansas), this protein is Large ribosomal subunit protein bL21.